The chain runs to 296 residues: MNIQLLQVFLTTAREGSISKAALTLNYAQSNVTNKIQQLENDLQTKLFYRHSRGITLTPPGQILVSYSEKILHTIEEARAAMGESSAPSGPLRIGSMETTAAVWLPQLLAHYNNLYPNVDLNLVTGPTEQQIQAVLHYELNGAFISGPIEHPDLVQEKVLDEEMVLVTSASHPVISSIQDVQTQTMLVFRKGCSYRAKLNHILQEEGLLPIKLMEFGILEAIIGCVSAGLGISLLPRSIIASHEKEGRIRSHTISDKYSFVSTMFIRRKDTLITPALSAFLTHMRDHFQIKRPDQS.

The 58-residue stretch at 1-58 (MNIQLLQVFLTTAREGSISKAALTLNYAQSNVTNKIQQLENDLQTKLFYRHSRGITLT) folds into the HTH lysR-type domain. Positions 18-37 (ISKAALTLNYAQSNVTNKIQ) form a DNA-binding region, H-T-H motif.

This sequence belongs to the LysR transcriptional regulatory family.

Its function is as follows. Positive regulator of glutamate biosynthesis (gltAB genes). Negatively regulates its own expression. The polypeptide is HTH-type transcriptional regulator GltR (gltR) (Bacillus subtilis (strain 168)).